A 147-amino-acid chain; its full sequence is Large ribosomal subunit protein uL13 (147 aa).

The protein belongs to the universal ribosomal protein uL13 family. As to quaternary structure, part of the 50S ribosomal subunit.

This protein is one of the early assembly proteins of the 50S ribosomal subunit, although it is not seen to bind rRNA by itself. It is important during the early stages of 50S assembly. In Beutenbergia cavernae (strain ATCC BAA-8 / DSM 12333 / CCUG 43141 / JCM 11478 / NBRC 16432 / NCIMB 13614 / HKI 0122), this protein is Large ribosomal subunit protein uL13.